We begin with the raw amino-acid sequence, 544 residues long: Putative lipase ATG15 (544 aa).

The Cytoplasmic portion of the chain corresponds to 1–45 (MVADFDSGWYEGAGDELGQGARNGVLRERLGGNEKAQVVRSRRKA). The helical; Signal-anchor for type II membrane protein transmembrane segment at 46 to 66 (VAWNVLMVLGLILYVLYSACF) threads the bilayer. The Lumenal portion of the chain corresponds to 67–544 (AQARQWWRTN…NWFGYCTEYA (478 aa)). 3 N-linked (GlcNAc...) asparagine glycosylation sites follow: asparagine 200, asparagine 229, and asparagine 234. Residue serine 362 is the Charge relay system of the active site. The interval 508 to 530 (PMPSSVASKPTPTPTSPGSPSST) is disordered.

It belongs to the AB hydrolase superfamily. Lipase family. Binds to both phosphatidylinositol (PI) and phosphatidylinositol 3,5-bisphosphate (PIP2).

Its subcellular location is the endosome. It localises to the multivesicular body membrane. It is found in the prevacuolar compartment membrane. It carries out the reaction a triacylglycerol + H2O = a diacylglycerol + a fatty acid + H(+). Lipase which is essential for lysis of subvacuolar cytoplasm to vacuole targeted bodies and intravacuolar autophagic bodies. Involved in the lysis of intravacuolar multivesicular body (MVB) vesicles. The intravacuolar membrane disintegration by ATG15 is critical to life span extension. The polypeptide is Putative lipase ATG15 (ATG15) (Eremothecium gossypii (strain ATCC 10895 / CBS 109.51 / FGSC 9923 / NRRL Y-1056) (Yeast)).